A 55-amino-acid chain; its full sequence is MAKKTDTRIVINMACTDCGERNYTTEKNKRNDPRRIELNKYCPRCREAKVHRETK.

It belongs to the bacterial ribosomal protein bL33 family.

The polypeptide is Large ribosomal subunit protein bL33 (Dehalococcoides mccartyi (strain ATCC BAA-2266 / KCTC 15142 / 195) (Dehalococcoides ethenogenes (strain 195))).